Reading from the N-terminus, the 1701-residue chain is Rho guanine nucleotide exchange factor TIAM2 (1701 aa).

Disordered stretches follow at residues 1-21 (MGNS…NTIT), 201-250 (SPTL…SSWY), 265-293 (GSFL…FNQS), and 389-417 (SLSR…DGLN). The N-myristoyl glycine moiety is linked to residue glycine 2. Residues 238–248 (SKGSSLSSESS) show a composition bias toward low complexity. Basic and acidic residues predominate over residues 397–413 (LQEPRSKEGSDYFDSRS). In terms of domain architecture, PH 1 spans 506-620 (VVRKAGWLFF…WVTAVHSACA (115 aa)). Residues 628–695 (GKEDTLRLLK…KFHMDLFRMR (68 aa)) are a coiled coil. The region spanning 810–881 (IQTYVHFQDN…YMQQQVYDEI (72 aa)) is the RBD domain. Positions 890–976 (DVQLTKTGSV…GLTLIARPPD (87 aa)) constitute a PDZ domain. The interval 1070 to 1092 (DSQANGMEGPRENQDPPPRSLAR) is disordered. A DH domain is found at 1099–1293 (RLRKVIQELV…EKVASHINEM (195 aa)). The PH 2 domain occupies 1347-1478 (DLELTVFVFK…EKTCKDRLVP (132 aa)). Disordered stretches follow at residues 1500-1556 (NSSS…GLAD) and 1568-1628 (LSDE…PKLV). The segment covering 1513-1527 (GTLLDSDEGSLSSGT) has biased composition (low complexity). Residue serine 1583 is modified to Phosphoserine. Basic and acidic residues predominate over residues 1596 to 1607 (RISEDPDVHPEA). Threonine 1648 carries the phosphothreonine modification.

It belongs to the TIAM family. In terms of assembly, interacts with MAP1A, MAP1B, PARP1 and YWHAE. Interacts with CD44, PARD3 and MAPK8IP2. Phosphorylated on serine and threonine residues. Phosphorylated on Thr-1648 by Rho-kinase. Its phosphorylation by Rho-kinase inhibits its guanine nucleotide exchange activity, its interaction with MAP1A, MAP1B, PARP1 and YWHAE and reduces its ability to promote neurite growth. Expressed in the occipital, frontal and temporal lobes, cerebellum, putamen and testis.

It is found in the cytoplasm. It localises to the cell projection. The protein localises to the lamellipodium. The protein resides in the filopodium. Its subcellular location is the growth cone. It is found in the neuron projection. It localises to the perikaryon. In terms of biological role, modulates the activity of RHO-like proteins and connects extracellular signals to cytoskeletal activities. Acts as a GDP-dissociation stimulator protein that stimulates the GDP-GTP exchange activity of RHO-like GTPases and activates them. Mediates extracellular laminin signals to activate Rac1, contributing to neurite growth. Involved in lamellipodial formation and advancement of the growth cone of embryonic hippocampal neurons. Promotes migration of neurons in the cerebral cortex. When overexpressed, induces membrane ruffling accompanied by the accumulation of actin filaments along the altered plasma membrane. Activates specifically RAC1, but not CDC42 and RHOA. In Homo sapiens (Human), this protein is Rho guanine nucleotide exchange factor TIAM2 (TIAM2).